We begin with the raw amino-acid sequence, 427 residues long: Glutamate-1-semialdehyde 2,1-aminomutase (427 aa).

K265 carries the N6-(pyridoxal phosphate)lysine modification.

Belongs to the class-III pyridoxal-phosphate-dependent aminotransferase family. HemL subfamily. In terms of assembly, homodimer. Requires pyridoxal 5'-phosphate as cofactor.

The protein resides in the cytoplasm. It carries out the reaction (S)-4-amino-5-oxopentanoate = 5-aminolevulinate. Its pathway is porphyrin-containing compound metabolism; protoporphyrin-IX biosynthesis; 5-aminolevulinate from L-glutamyl-tRNA(Glu): step 2/2. In Neisseria meningitidis serogroup A / serotype 4A (strain DSM 15465 / Z2491), this protein is Glutamate-1-semialdehyde 2,1-aminomutase.